The following is a 329-amino-acid chain: Diaminopimelate epimerase (329 aa).

Positions 14 and 73 each coordinate substrate. Cys82 serves as the catalytic Proton donor. Substrate contacts are provided by residues Gly83–Asn84, Asn170, Asn206, and Glu224–Arg225. The active-site Proton acceptor is the Cys233. Gly234 to Thr235 lines the substrate pocket.

Belongs to the diaminopimelate epimerase family. In terms of assembly, homodimer.

Its subcellular location is the cytoplasm. The catalysed reaction is (2S,6S)-2,6-diaminopimelate = meso-2,6-diaminopimelate. It functions in the pathway amino-acid biosynthesis; L-lysine biosynthesis via DAP pathway; DL-2,6-diaminopimelate from LL-2,6-diaminopimelate: step 1/1. In terms of biological role, catalyzes the stereoinversion of LL-2,6-diaminopimelate (L,L-DAP) to meso-diaminopimelate (meso-DAP), a precursor of L-lysine and an essential component of the bacterial peptidoglycan. In Listeria monocytogenes serotype 4b (strain F2365), this protein is Diaminopimelate epimerase.